Consider the following 602-residue polypeptide: Multicopper oxidase aurL2 (602 aa).

Residues 1–17 (MLFRFLALLPFVAGAFA) form the signal peptide. Plastocyanin-like domains lie at 38 to 149 (DIKI…VRDA) and 160 to 317 (IPLL…KYRC). Asparagine 52 and asparagine 80 each carry an N-linked (GlcNAc...) asparagine glycan. The Cu cation site is built by histidine 84, histidine 86, histidine 130, and histidine 132. Residues asparagine 201, asparagine 247, asparagine 337, asparagine 383, asparagine 387, asparagine 419, and asparagine 424 are each glycosylated (N-linked (GlcNAc...) asparagine). The 136-residue stretch at 421–556 (TTPNYTLALE…QVMGMATVWV (136 aa)) folds into the Plastocyanin-like 3 domain. Position 469 (histidine 469) interacts with Cu cation. 2 N-linked (GlcNAc...) asparagine glycosylation sites follow: asparagine 482 and asparagine 486.

It belongs to the multicopper oxidase family.

The protein operates within pigment biosynthesis. Functionally, multicopper oxidase; part of the gene cluster that mediates the biosynthesis of aurofusarin, a red mycelium pigment which is acting as a mycotoxin. The first step is performed by the polyketide synthase which condenses one acetyl-CoA and 6 malonyl-CoA units to form the first intermediate, the cyclic heptaketide and yellow pigment YWA1. The C2 hydroxyl group in the pyrone ring of YWA1 is probably formed during ring closure by an aldol-type cyclization reaction. The dehydratase aurZ then acts as the first tailoring enzyme in the aurofusarin biosynthetic pathway by converting YWA1 to nor-rubrofusarin. Nor-rubrofusarin is then methylated to rubrofusarin by the O-methyltransferase aurJ. Rubrofusarin is then transported across the plasma membrane by the rubrofusarin-specific pump aurT for further enzymatic processing by the extracellular complex composed of GIP1, aurF, aurO and aurS to yield aurofusarin. The sequence is that of Multicopper oxidase aurL2 (aurL2) from Gibberella zeae (strain ATCC MYA-4620 / CBS 123657 / FGSC 9075 / NRRL 31084 / PH-1) (Wheat head blight fungus).